The primary structure comprises 2380 residues: Probable polyketide synthase 25 (2380 aa).

A compositionally biased stretch (polar residues) spans 1 to 18; sequence MDNSYLNNPQFDINNGNK. A disordered region spans residues 1–29; the sequence is MDNSYLNNPQFDINNGNKEVTDDDNNKNN. One can recognise a Ketosynthase family 3 (KS3) domain in the interval 31 to 457; it reads DNLVAIVGVG…GSNCCLVLSQ (427 aa). Catalysis depends on for beta-ketoacyl synthase activity residues cysteine 198, histidine 340, and histidine 380. Residues 649 to 682 are acyl/malonyl transferase; it reads GIKASFMLGHSLGEVTTAYCSGMIDIDQLCYLIY. The For acyl/malonyl transferase activity role is filled by serine 659. Residues 948–1070 form an N-terminal hotdog fold region; it reads ISILGNSMQD…ANFQLYNNGK (123 aa). One can recognise a PKS/mFAS DH domain in the interval 948–1234; the sequence is ISILGNSMQD…CTSLTPVKDP (287 aa). Residue histidine 982 is the Proton acceptor; for dehydratase activity of the active site. The interval 1085-1234 is C-terminal hotdog fold; the sequence is NLSSIPWDKF…CTSLTPVKDP (150 aa). Catalysis depends on aspartate 1148, which acts as the Proton donor; for dehydratase activity. One can recognise a Carrier domain in the interval 2299 to 2376; the sequence is KNSTNIKDKF…MVCQIINDNF (78 aa). Residue serine 2336 is modified to O-(pantetheine 4'-phosphoryl)serine.

Requires pantetheine 4'-phosphate as cofactor.

Its function is as follows. Probable polyketide synthase. This chain is Probable polyketide synthase 25 (pks25), found in Dictyostelium discoideum (Social amoeba).